The following is a 545-amino-acid chain: Pseudouridylate synthase RPUSD2 (545 aa).

Positions 48–121 (GLRASHQQNG…PPPKKRRTGV (74 aa)) are disordered. A Phosphoserine modification is found at Ser68. Residue Asp274 is part of the active site. Thr477 bears the Phosphothreonine mark.

It belongs to the pseudouridine synthase RluA family.

The enzyme catalyses a uridine in mRNA = a pseudouridine in mRNA. Pseudouridine synthase that catalyzes pseudouridylation of mRNAs. This chain is Pseudouridylate synthase RPUSD2, found in Homo sapiens (Human).